The chain runs to 600 residues: Proline--tRNA ligase (600 aa).

This sequence belongs to the class-II aminoacyl-tRNA synthetase family. ProS type 1 subfamily. In terms of assembly, homodimer.

Its subcellular location is the cytoplasm. The enzyme catalyses tRNA(Pro) + L-proline + ATP = L-prolyl-tRNA(Pro) + AMP + diphosphate. Its function is as follows. Catalyzes the attachment of proline to tRNA(Pro) in a two-step reaction: proline is first activated by ATP to form Pro-AMP and then transferred to the acceptor end of tRNA(Pro). As ProRS can inadvertently accommodate and process non-cognate amino acids such as alanine and cysteine, to avoid such errors it has two additional distinct editing activities against alanine. One activity is designated as 'pretransfer' editing and involves the tRNA(Pro)-independent hydrolysis of activated Ala-AMP. The other activity is designated 'posttransfer' editing and involves deacylation of mischarged Ala-tRNA(Pro). The misacylated Cys-tRNA(Pro) is not edited by ProRS. The protein is Proline--tRNA ligase of Prochlorococcus marinus (strain MIT 9312).